Consider the following 141-residue polypeptide: MSENVMTLQVITPAGVVYDHHANYITARTTNGEIGILPNMISTIAGLEIDELKVRRPDDETHVDYIAVNGGIIEIKDSLVTIVADSAERNRDIDVSRAERAKIRAEKALEVAKAEKKSDEIKRVEVALHRALNRLNVSSHN.

Belongs to the ATPase epsilon chain family. In terms of assembly, F-type ATPases have 2 components, CF(1) - the catalytic core - and CF(0) - the membrane proton channel. CF(1) has five subunits: alpha(3), beta(3), gamma(1), delta(1), epsilon(1). CF(0) has three main subunits: a, b and c.

Its subcellular location is the cell membrane. Functionally, produces ATP from ADP in the presence of a proton gradient across the membrane. The protein is ATP synthase epsilon chain of Lactococcus lactis subsp. cremoris (strain SK11).